The primary structure comprises 232 residues: Uracil-DNA glycosylase (232 aa).

The active-site Proton acceptor is the Asp66.

This sequence belongs to the uracil-DNA glycosylase (UDG) superfamily. UNG family.

It is found in the cytoplasm. It catalyses the reaction Hydrolyzes single-stranded DNA or mismatched double-stranded DNA and polynucleotides, releasing free uracil.. Functionally, excises uracil residues from the DNA which can arise as a result of misincorporation of dUMP residues by DNA polymerase or due to deamination of cytosine. This Lactobacillus helveticus (strain DPC 4571) protein is Uracil-DNA glycosylase.